The primary structure comprises 479 residues: 6-phosphogluconate dehydrogenase, decarboxylating (479 aa).

NADP(+) contacts are provided by residues 9 to 14 (GLGVMG), 32 to 34 (NRT), 77 to 79 (VQA), and N105. Substrate contacts are provided by residues N105 and 131–133 (SGG). The active-site Proton acceptor is K186. 189–190 (HN) contributes to the substrate binding site. The active-site Proton donor is the E193. Substrate-binding residues include Y194, K263, R290, R454, and H460.

The protein belongs to the 6-phosphogluconate dehydrogenase family. As to quaternary structure, homodimer.

The enzyme catalyses 6-phospho-D-gluconate + NADP(+) = D-ribulose 5-phosphate + CO2 + NADPH. The protein operates within carbohydrate degradation; pentose phosphate pathway; D-ribulose 5-phosphate from D-glucose 6-phosphate (oxidative stage): step 3/3. In terms of biological role, catalyzes the oxidative decarboxylation of 6-phosphogluconate to ribulose 5-phosphate and CO(2), with concomitant reduction of NADP to NADPH. The sequence is that of 6-phosphogluconate dehydrogenase, decarboxylating (GND) from Trypanosoma brucei brucei.